The sequence spans 397 residues: DnaJ homolog subfamily A member 4 (397 aa).

The region spanning 4–70 (ETQYYDILGV…RDIYDQGGEQ (67 aa)) is the J domain. Ser18 bears the Phosphoserine mark. A CR-type zinc finger spans residues 122–206 (GITKKLALQK…CSGAKVTREK (85 aa)). Zn(2+) is bound by residues Cys135, Cys138, Cys151, Cys154, Cys178, Cys181, Cys194, and Cys197. 4 CXXCXGXG motif repeats span residues 135–142 (CEKCEGIG), 151–158 (CPLCKGRG), 178–185 (CIECKGQG), and 194–201 (CENCSGAK). The span at 366–380 (EFNPNEQSWRQHREA) shows a compositional bias: basic and acidic residues. The interval 366–397 (EFNPNEQSWRQHREAYEEDDEEPRAGVQCQTA) is disordered. Cys394 is modified (cysteine methyl ester). A lipid anchor (S-farnesyl cysteine) is attached at Cys394. The propeptide at 395-397 (QTA) is removed in mature form.

In terms of tissue distribution, specifically expressed in testis and heart.

Its subcellular location is the membrane. This chain is DnaJ homolog subfamily A member 4 (Dnaja4), found in Mus musculus (Mouse).